Reading from the N-terminus, the 425-residue chain is GPI mannosyltransferase 1 (425 aa).

9 consecutive transmembrane segments (helical) span residues 11–31 (VIGA…WQDA), 85–105 (FFAF…WLIA), 144–164 (LLGV…VSLA), 166–186 (VILG…PAVV), 233–253 (IHLT…MYIL), 295–315 (FESL…PLVL), 340–360 (SQYF…SSLM), 367–387 (ILVG…GYNL), and 398–418 (GLFL…GIIV).

It belongs to the PIGM family.

It localises to the endoplasmic reticulum membrane. The protein operates within glycolipid biosynthesis; glycosylphosphatidylinositol-anchor biosynthesis. In terms of biological role, mannosyltransferase involved in glycosylphosphatidylinositol-anchor biosynthesis. Transfers the first alpha-1,4-mannose to GlcN-acyl-PI during GPI precursor assembly. Required for cell wall integrity. This Aspergillus fumigatus (strain ATCC MYA-4609 / CBS 101355 / FGSC A1100 / Af293) (Neosartorya fumigata) protein is GPI mannosyltransferase 1 (gpi14).